Reading from the N-terminus, the 229-residue chain is Orotidine 5'-phosphate decarboxylase (229 aa).

Substrate is bound by residues D10, K32, 59 to 68, T119, R180, Q189, G209, and R210; that span reads DLKFHDIPNT. K61 serves as the catalytic Proton donor.

It belongs to the OMP decarboxylase family. Type 1 subfamily. Homodimer.

It catalyses the reaction orotidine 5'-phosphate + H(+) = UMP + CO2. It functions in the pathway pyrimidine metabolism; UMP biosynthesis via de novo pathway; UMP from orotate: step 2/2. Catalyzes the decarboxylation of orotidine 5'-monophosphate (OMP) to uridine 5'-monophosphate (UMP). In Legionella pneumophila (strain Corby), this protein is Orotidine 5'-phosphate decarboxylase.